Here is a 95-residue protein sequence, read N- to C-terminus: Small ribosomal subunit protein bS21 (95 aa).

The tract at residues 56-95 (KLARKKMQREGLLPMKPKPVFGAGPGAGRGGPAAGPRGPR) is disordered. Residues 78 to 88 (AGPGAGRGGPA) show a composition bias toward gly residues.

Belongs to the bacterial ribosomal protein bS21 family.

The protein is Small ribosomal subunit protein bS21 of Nitrobacter winogradskyi (strain ATCC 25391 / DSM 10237 / CIP 104748 / NCIMB 11846 / Nb-255).